We begin with the raw amino-acid sequence, 1248 residues long: Structural polyprotein (1248 aa).

A compositionally biased stretch (polar residues) spans 1-10; it reads MEFIPTQTFY. A disordered region spans residues 1–104; that stretch reads MEFIPTQTFY…KKKKPGRRER (104 aa). The tract at residues 36–68 is host transcription inhibition; it reads RKAGQLAQLISAVNKLTMRAVPQQKPRKNRKNK. The span at 60–72 shows a compositional bias: basic residues; that stretch reads KPRKNRKNKKQKQ. The short motif at 61 to 99 is the Nuclear localization signal element; that stretch reads PRKNRKNKKQKQKQQAPRNNMNQKKQPPKKKPAQKKKKP. The segment covering 73-85 has biased composition (low complexity); it reads KQQAPRNNMNQKK. A binding to the viral RNA region spans residues 84–114; the sequence is KKQPPKKKPAQKKKKPGRRERMCMKIENDCI. The span at 86–101 shows a compositional bias: basic residues; it reads QPPKKKPAQKKKKPGR. The ribosome-binding stretch occupies residues 99–113; sequence PGRRERMCMKIENDC. Cys113 and Cys128 are disulfide-bonded. Residues 113-261 enclose the Peptidase S3 domain; sequence CIFEVKHEGK…KITPEGAEEW (149 aa). The active-site Charge relay system is His139. The Nuclear export signal motif lies at 144–154; it reads IDNADLAKLAF. The tract at residues 155 to 160 is interaction with spike glycoprotein E2; it reads KRSSKY. The active-site Charge relay system is Asp161. Positions 183 to 193 are dimerization of the capsid protein; it reads PEGYYNWHHGA. Ser213 acts as the Charge relay system in catalysis. Residues 219–223 are dimerization of the capsid protein; the sequence is DNKGR. Positions 262 to 274 are functions as an uncleaved signal peptide for the precursor of protein E3/E2; the sequence is SLAIPVMCLLANT. Over 262–692 the chain is Extracellular; sequence SLAIPVMCLL…YYYELYPTMT (431 aa). 9 disulfides stabilise this stretch: Cys269-Cys278, Cys283-Cys287, Cys286-Cys318, Cys344-Cys450, Cys347-Cys353, Cys416-Cys430, Cys478-Cys591, Cys526-Cys550, and Cys528-Cys545. Asn273 carries N-linked (GlcNAc...) asparagine; by host glycosylation. Interaction with host Mxra8 receptor regions lie at residues 351–354 and 387–389; these read HSCH and HDW. Interaction with host Mxra8 receptor regions lie at residues 509 to 512 and 541 to 547; these read QSGN and VINNCKV. Residues Asn588 and Asn670 are each glycosylated (N-linked (GlcNAc...) asparagine; by host). A helical membrane pass occupies residues 693 to 713; it reads VVVVSVASFVLLSMVGVAVGM. Residues 714 to 748 are Cytoplasmic-facing; it reads CMCARRRCITPYELTPGATVPFLLSLICCIRTAKA. The interaction with the capsid protein stretch occupies residues 716–720; that stretch reads CARRR. Residues Cys721, Cys741, and Cys742 are each lipidated (S-palmitoyl cysteine; by host). The segment at 721–741 is transient transmembrane before p62-6K protein processing; sequence CITPYELTPGATVPFLLSLIC. Cysteines 721 and 742 form a disulfide. The Extracellular segment spans residues 749 to 763; the sequence is ATYQEAAVYLWNEQQ. The chain crosses the membrane as a helical span at residues 764-784; the sequence is PLFWLQAIIPLAALIVLCNCL. The Cytoplasmic segment spans residues 785 to 795; it reads RLLPCCCKTLT. Residues 796–816 form a helical membrane-spanning segment; the sequence is FLAVMSVGAHTVSAYEHVTVI. The Extracellular segment spans residues 817–1224; sequence PNTVGVPYKT…AMSWVQKITG (408 aa). 3 disulfide bridges follow: Cys858-Cys923, Cys871-Cys903, and Cys877-Cys887. The tract at residues 893–910 is E1 fusion peptide loop; that stretch reads VYPFMWGGAYCFCDTENT. N-linked (GlcNAc...) asparagine; by host glycans are attached at residues Asn950 and Asn1079. Disulfide bonds link Cys1068/Cys1080, Cys1110/Cys1185, Cys1115/Cys1189, and Cys1137/Cys1179. A helical transmembrane segment spans residues 1225-1245; sequence GVGLVVAVAALILIVVLCVSF. Cys1242 carries the S-palmitoyl cysteine; by host lipid modification. Residues 1246-1248 lie on the Cytoplasmic side of the membrane; that stretch reads SRH.

In terms of assembly, homodimer. Homomultimer. Interacts with host karyopherin KPNA4; this interaction allows the nuclear import of the viral capsid protein. Interacts with spike glycoprotein E2. Interacts with host IRAK1; the interaction leads to inhibition of IRAK1-dependent signaling. As to quaternary structure, the precursor of protein E3/E2 and E1 form a heterodimer shortly after synthesis. Interacts with spike glycoprotein E2. The precursor of protein E3/E2 and E1 form a heterodimer shortly after synthesis. Processing of the precursor of protein E3/E2 into E2 and E3 results in a heterodimer of the spike glycoproteins E2 and E1. Spike at virion surface are constituted of three E2-E1 heterodimers. After target cell attachment and endocytosis, E1 change conformation to form homotrimers. Interacts with 6K protein. Interacts with host MXRA8; this interaction mediates virus entry. The interaction involves 2 adjacent E2-E1 heterodimers. In terms of assembly, interacts with spike glycoprotein E1. Processing of the precursor of protein E3/E2 into E2 and E3 results in a heterodimer of the spike glycoproteins E2 and E1. Spike at virion surface are constituted of a trimer of E2-E1 heterodimers. Interacts with 6K protein. Interacts with host MXRA8; this interaction mediates virus entry. The interaction involves 2 adjacent E2-E1 heterodimers. As to quaternary structure, oligomer. Interacts with spike glycoprotein E1. Interacts with spike glycoprotein E2. Structural polyprotein: Specific enzymatic cleavages in vivo yield mature proteins. Capsid protein is auto-cleaved during polyprotein translation, unmasking a signal peptide at the N-terminus of the precursor of E3/E2. The remaining polyprotein is then targeted to the host endoplasmic reticulum, where host signal peptidase cleaves it into pE2, 6K and E1 proteins. pE2 is further processed to mature E3 and E2 by host furin in trans-Golgi vesicle. Post-translationally, palmitoylated via thioester bonds. These palmitoylations may induce disruption of the C-terminus transmembrane. This would result in the reorientation of E2 C-terminus from lumenal to cytoplasmic side. In terms of processing, N-glycosylated. Palmitoylated via thioester bonds.

It localises to the virion. The protein resides in the host cytoplasm. Its subcellular location is the host cell membrane. It is found in the host nucleus. The protein localises to the virion membrane. It localises to the host Golgi apparatus. The protein resides in the host trans-Golgi network. Its subcellular location is the host endoplasmic reticulum. It carries out the reaction Autocatalytic release of the core protein from the N-terminus of the togavirus structural polyprotein by hydrolysis of a -Trp-|-Ser- bond.. Forms an icosahedral capsid with a T=4 symmetry composed of 240 copies of the capsid protein surrounded by a lipid membrane through which penetrate 80 spikes composed of trimers of E1-E2 heterodimers. The capsid protein binds to the viral RNA genome at a site adjacent to a ribosome binding site for viral genome translation following genome release. Possesses a protease activity that results in its autocatalytic cleavage from the nascent structural protein. Following its self-cleavage, the capsid protein transiently associates with ribosomes, and within several minutes the protein binds to viral RNA and rapidly assembles into icosahedric core particles. The resulting nucleocapsid eventually associates with the cytoplasmic domain of the spike glycoprotein E2 at the cell membrane, leading to budding and formation of mature virions. In case of infection, new virions attach to target cells and after clathrin-mediated endocytosis their membrane fuses with the host endosomal membrane. This leads to the release of the nucleocapsid into the cytoplasm, followed by an uncoating event necessary for the genomic RNA to become accessible. The uncoating might be triggered by the interaction of capsid proteins with ribosomes. Binding of ribosomes would release the genomic RNA since the same region is genomic RNA-binding and ribosome-binding. Specifically inhibits interleukin-1 receptor-associated kinase 1/IRAK1-dependent signaling during viral entry, representing a means by which the alphaviruses may evade innate immune detection and activation prior to viral gene expression. Degrades host cyclic GMP-AMP synthase (CGAS) thereby inhibiting the cGAS-STING pathway. In terms of biological role, provides the signal sequence for the translocation of the precursor of protein E3/E2 to the host endoplasmic reticulum. Furin-cleaved E3 remains associated with spike glycoprotein E1 and mediates pH protection of the latter during the transport via the secretory pathway. After virion release from the host cell, the assembly protein E3 is gradually released in the extracellular space. Functionally, plays a role in viral attachment to target host cell, by binding to the cell receptor MXRA8. Synthesized as a p62 precursor which is processed by furin at the cell membrane just before virion budding, giving rise to E2-E1 heterodimer. The p62-E1 heterodimer is stable, whereas E2-E1 is unstable and dissociate at low pH. p62 is processed at the last step, presumably to avoid E1 fusion activation before its final export to cell surface. E2 C-terminus contains a transitory transmembrane that would be disrupted by palmitoylation, resulting in reorientation of the C-terminal tail from lumenal to cytoplasmic side. This step is critical since E2 C-terminus is involved in budding by interacting with capsid proteins. This release of E2 C-terminus in cytoplasm occurs lately in protein export, and precludes premature assembly of particles at the endoplasmic reticulum membrane. Its function is as follows. Acts as a viroporin that participates in virus glycoprotein processing and transport to the plasma membrane, cell permeabilization and budding of viral particles. Disrupts the calcium homeostasis of the cell, probably at the endoplasmic reticulum level. This leads to cytoplasmic calcium elevation. Because of its lipophilic properties, the 6K protein is postulated to influence the selection of lipids that interact with the transmembrane domains of the glycoproteins, which, in turn, affects the deformability of the bilayer required for the extreme curvature that occurs as budding proceeds. Present in low amount in virions, about 3% compared to viral glycoproteins. Class II viral fusion protein. Fusion activity is inactive as long as E1 is bound to E2 in mature virion. After virus attachment to target cell via host MXRA8 and endocytosis, acidification of the endosome induce dissociation of E1/E2 heterodimer and concomitant trimerization of the E1 subunits. This E1 trimer is fusion active, and promotes release of viral nucleocapsid in cytoplasm after endosome and viral membrane fusion. Efficient fusion requires the presence of cholesterol and sphingolipid in the target membrane. This is Structural polyprotein from Chikungunya virus (strain Nagpur) (CHIKV).